The sequence spans 151 residues: Protein archease-like (151 aa).

Residues D20, D150, and I151 each contribute to the Ca(2+) site.

The protein belongs to the archease family.

Its function is as follows. Component of the tRNA-splicing ligase complex required to facilitate the enzymatic turnover of catalytic subunit RtcB. The chain is Protein archease-like from Dictyostelium discoideum (Social amoeba).